Consider the following 354-residue polypeptide: Uroporphyrinogen decarboxylase (354 aa).

Substrate contacts are provided by residues arginine 27 to arginine 31, aspartate 77, tyrosine 154, threonine 209, and histidine 327.

Belongs to the uroporphyrinogen decarboxylase family. As to quaternary structure, homodimer.

It localises to the cytoplasm. It catalyses the reaction uroporphyrinogen III + 4 H(+) = coproporphyrinogen III + 4 CO2. Its pathway is porphyrin-containing compound metabolism; protoporphyrin-IX biosynthesis; coproporphyrinogen-III from 5-aminolevulinate: step 4/4. In terms of biological role, catalyzes the decarboxylation of four acetate groups of uroporphyrinogen-III to yield coproporphyrinogen-III. In Mannheimia succiniciproducens (strain KCTC 0769BP / MBEL55E), this protein is Uroporphyrinogen decarboxylase.